The following is a 196-amino-acid chain: Transcriptional regulatory protein UhpA (196 aa).

The region spanning 3 to 116 (TVALIDDHLI…ELIAAVHTVA (114 aa)) is the Response regulatory domain. Asp-54 carries the post-translational modification 4-aspartylphosphate. Residues 131–196 (AAGRQDPLTK…ELAHRMFDGW (66 aa)) enclose the HTH luxR-type domain. The H-T-H motif DNA-binding region spans 155 to 174 (VKEIAAELGLSPKTVHVHRA).

Phosphorylated and dephosphorylated by UhpB.

It localises to the cytoplasm. Part of the UhpABC signaling cascade that controls the expression of the hexose phosphate transporter UhpT. Activates the transcription of the uhpT gene. Acts by binding specifically to the uhpT promoter region. The chain is Transcriptional regulatory protein UhpA (uhpA) from Salmonella typhimurium (strain LT2 / SGSC1412 / ATCC 700720).